The chain runs to 169 residues: Gametocyte-specific factor 1-like (169 aa).

2 consecutive CHHC U11-48K-type zinc fingers follow at residues 6 to 33 (LETC…RRKN) and 40 to 67 (MASC…VNKS). Cys-9, His-15, His-25, Cys-29, Cys-43, His-49, His-59, and Cys-63 together coordinate Zn(2+). Disordered stretches follow at residues 67 to 103 (STME…LPNP) and 131 to 169 (SDTR…LLKA). Residues 131-158 (SDTRESETDDHNPIPDCPRRRSSDRESE) are compositionally biased toward basic and acidic residues.

The protein belongs to the UPF0224 (FAM112) family.

This Bos taurus (Bovine) protein is Gametocyte-specific factor 1-like (GTSF1L).